The sequence spans 504 residues: Maturase K (504 aa).

The protein belongs to the intron maturase 2 family. MatK subfamily.

Its subcellular location is the plastid. It is found in the chloroplast. In terms of biological role, usually encoded in the trnK tRNA gene intron. Probably assists in splicing its own and other chloroplast group II introns. The chain is Maturase K from Betula papyrifera (Paper birch).